Here is a 245-residue protein sequence, read N- to C-terminus: tRNA1(Val) (adenine(37)-N6)-methyltransferase (245 aa).

This sequence belongs to the methyltransferase superfamily. tRNA (adenine-N(6)-)-methyltransferase family.

Its subcellular location is the cytoplasm. The enzyme catalyses adenosine(37) in tRNA1(Val) + S-adenosyl-L-methionine = N(6)-methyladenosine(37) in tRNA1(Val) + S-adenosyl-L-homocysteine + H(+). Its function is as follows. Specifically methylates the adenine in position 37 of tRNA(1)(Val) (anticodon cmo5UAC). In Enterobacter sp. (strain 638), this protein is tRNA1(Val) (adenine(37)-N6)-methyltransferase.